The sequence spans 738 residues: Putative RNA-binding protein EEED8.10 (738 aa).

One can recognise an RRM domain in the interval 112–201 (RKIVVSNISA…QVMVVSAYVS (90 aa)). The tract at residues 211 to 237 (LSDDVGSREDTPLSRASSTQSLASGSE) is disordered. The segment covering 224 to 237 (SRASSTQSLASGSE) has biased composition (polar residues). In terms of domain architecture, F-box spans 239-297 (SFNLGNVPDKILRRVISFLPIHETIRLERVNKKFMEESIKSWELVNKIALARETVFNKQ).

This is Putative RNA-binding protein EEED8.10 from Caenorhabditis elegans.